We begin with the raw amino-acid sequence, 2000 residues long: Sodium channel protein type 3 subunit alpha (2000 aa).

Over 1–128 (MAQALLVPPG…KIAIKILVHS (128 aa)) the chain is Cytoplasmic. The disordered stretch occupies residues 28 to 60 (RAAEEKAKKPKKEQDNDDENKPKPNSDLEAGKN). A compositionally biased stretch (basic and acidic residues) spans 46–57 (ENKPKPNSDLEA). One copy of the I repeat lies at 110–455 (ILTPLNPVRK…QQMLEQLKKQ (346 aa)). A helical transmembrane segment spans residues 129–146 (LFSMLIMCTILTNCVFMT). The Extracellular portion of the chain corresponds to 147–152 (LSNPPD). The chain crosses the membrane as a helical span at residues 153 to 174 (WTKNVEYTFTGIYTFESLIKIL). Topologically, residues 175 to 188 (ARGFCLEDFTFLRD) are cytoplasmic. A helical transmembrane segment spans residues 189-206 (PWNWLDFSVIVMAYVTEF). The Extracellular portion of the chain corresponds to 207–213 (VSLGNVS). N-linked (GlcNAc...) asparagine glycosylation is present at N211. Residues 214–235 (ALRTFRVLRALKTISVIPGLKT) form a helical membrane-spanning segment. Topologically, residues 236–249 (IVGALIQSVKKLSD) are cytoplasmic. The helical transmembrane segment at 250–269 (VMILTVFCLSVFALIGLQLF) threads the bilayer. The Extracellular segment spans residues 270–369 (MGNLRNKCLQ…NYGYTSFDTF (100 aa)). N-linked (GlcNAc...) asparagine glycans are attached at residues N290, N296, N302, N307, and N339. An intramembrane region (pore-forming) is located at residues 370 to 386 (SWAFLSLFRLMTQDYWE). Residues 387 to 397 (NLYQLTLRAAG) are Extracellular-facing. A helical transmembrane segment spans residues 398-424 (KTYMIFFVLVIFLGSFYLVNLILAVVA). The Cytoplasmic segment spans residues 425 to 761 (MAYEEQNQAT…LVNLIVMDPF (337 aa)). Phosphoserine occurs at positions 484, 485, and 486. Disordered regions lie at residues 493-528 (SKSA…KSES), 587-631 (VGSE…ASMS), and 662-681 (ALTS…ETEV). Over residues 500-509 (RNRRKKRRQR) the composition is skewed to basic residues. Composition is skewed to basic and acidic residues over residues 510 to 528 (EHLE…KSES) and 596 to 610 (DEHS…RRDS). The segment covering 662 to 678 (ALTSPTGQLPPEGTTTE) has biased composition (polar residues). Residues 742 to 1014 (CCDAWLKVKH…QIAVGRMQKG (273 aa)) form an II repeat. The chain crosses the membrane as a helical span at residues 762-779 (VDLAITICIVLNTLFMAM). Over 780 to 787 (EHYPMTEQ) the chain is Extracellular. The chain crosses the membrane as a helical span at residues 788–812 (FSSVLTVGNLVFTGIFTAEMVLKII). Topologically, residues 813 to 822 (AMDPYYYFQE) are cytoplasmic. The chain crosses the membrane as a helical span at residues 823 to 842 (GWNIFDGIIVSLSLMELGLS). Over 843-846 (NVEG) the chain is Extracellular. The chain crosses the membrane as a helical span at residues 847–865 (LSVLRSFRLLRVFKLAKSW). The Cytoplasmic segment spans residues 866–883 (PTLNMLIKIIGNSVGALG). Residues 884-904 (NLTLVLAIIVFIFAVVGMQLF) traverse the membrane as a helical segment. The Extracellular portion of the chain corresponds to 905–929 (GKSYKECVCKINDDCTLPRWHMNDF). An intrachain disulfide couples C913 to C919. Positions 930 to 945 (FHSFLIVFRVLCGEWI) form an intramembrane region, pore-forming. The Extracellular segment spans residues 946–956 (ETMWDCMEVAG). C951 and C960 are disulfide-bonded. The helical transmembrane segment at 957–983 (QTMCLIVFMLVMVIGNLVVLNLFLALL) threads the bilayer. Residues 984–1205 (LSSFSSDNLA…RKTCYSIVEH (222 aa)) are Cytoplasmic-facing. A disordered region spans residues 1118–1162 (EEFSSESELEESKEKLNATSSSEGSTVDVVLPREGEQAETEPEED). Residues 1188–1499 (KGKIWWNLRK…KKYYNAMKKL (312 aa)) form an III repeat. The chain crosses the membrane as a helical span at residues 1206–1226 (NWFETFIVFMILLSSGALAFE). Over 1227 to 1238 (DIYIEQRKTIKT) the chain is Extracellular. A helical transmembrane segment spans residues 1239–1260 (MLEYADKVFTYIFILEMLLKWV). At 1261–1266 (AYGFQT) the chain is on the cytoplasmic side. Residues 1267–1292 (YFTNAWCWLDFLIVDVSLVSLVANAL) form a helical membrane-spanning segment. The Extracellular portion of the chain corresponds to 1293-1301 (GYSELGAIK). The helical transmembrane segment at 1302–1320 (SLRTLRALRPLRALSRFEG) threads the bilayer. Residues 1321–1333 (MRVVVNALVGAIP) lie on the Cytoplasmic side of the membrane. The chain crosses the membrane as a helical span at residues 1334–1356 (SIMNVLLVCLIFWLIFSIMGVNL). The Extracellular segment spans residues 1357 to 1402 (FAGKFYHCVNMTTGNMFDISDVNNLSDCQALGKQARWKNVKVNFDN). C1364 and C1384 form a disulfide bridge. N1366 and N1380 each carry an N-linked (GlcNAc...) asparagine glycan. The segment at residues 1403 to 1419 (VGAGYLALLQVATFKGW) is an intramembrane region (pore-forming). The Extracellular segment spans residues 1420 to 1442 (MDIMYAAVDSRDVKLQPVYEENL). The helical transmembrane segment at 1443-1468 (YMYLYFVIFIIFGSFFTLNLFIGVII) threads the bilayer. Topologically, residues 1469 to 1526 (DNFNQQKKKFGGQDIFMTEEQKKYYNAMKKLGSKKPQKPIPRPANKFQGMVFDFVTRQ) are cytoplasmic. A Phosphoserine; by PKC modification is found at S1501. Residues 1508–1806 (IPRPANKFQG…WEKFDPDATQ (299 aa)) form an IV repeat. A helical transmembrane segment spans residues 1527–1545 (VFDISIMILICLNMVTMMV). Residues 1546–1553 (ETDDQGKY) lie on the Extracellular side of the membrane. The chain crosses the membrane as a helical span at residues 1554-1577 (MTLVLSRINLVFIVLFTGEFVLKL). At 1578 to 1587 (VSLRHYYFTI) the chain is on the cytoplasmic side. A helical transmembrane segment spans residues 1588-1605 (GWNIFDFVVVILSIVGMF). Over 1606-1617 (LAEMIEKYFVSP) the chain is Extracellular. The helical transmembrane segment at 1618-1640 (TLFRVIRLARIGRILRLIKGAKG) threads the bilayer. The Cytoplasmic segment spans residues 1641–1653 (IRTLLFALMMSLP). Residues 1654–1677 (ALFNIGLLLFLVMFIYAIFGMSNF) form a helical membrane-spanning segment. At 1678–1699 (AYVKKEAGIDDMFNFETFGNSM) the chain is on the extracellular side. An intramembrane region (pore-forming) is located at residues 1700-1712 (ICLFQITTSAGWD). The Extracellular portion of the chain corresponds to 1713-1744 (GLLAPILNSAPPDCDPDTIHPGSSVKGDCGNP). The helical transmembrane segment at 1745–1770 (SVGIFFFVSYIIISFLVVVNMYIAVI) threads the bilayer. Topologically, residues 1771 to 2000 (LENFSVATEE…KGKEVRENQK (230 aa)) are cytoplasmic. The IQ domain occupies 1900–1929 (EEVSAAIIQRNFRCYLLKQRLKNISSNYNK). Positions 1949-2000 (LNGNSTPEKTDGSSSTTSPPSYDSVTKPDKEKFEKDKPEKESKGKEVRENQK) are disordered. Positions 1974–2000 (TKPDKEKFEKDKPEKESKGKEVRENQK) are enriched in basic and acidic residues.

The protein belongs to the sodium channel (TC 1.A.1.10) family. Nav1.3/SCN3A subfamily. In terms of assembly, heterooligomer of an alpha subunit, SCN3A, and 1 to 3 regulatory beta subunits including SCN1B and SCN2B; disulfide-linked with some beta subunits like SCN2B. Interacts with NEDD4L; could regulate expression of SCN3A at the plasma membrane through ubiquitination-regulated endocytosis. Interacts with the conotoxin GVIIJ. In terms of processing, may be ubiquitinated by NEDD4L; which would promote its endocytosis. Phosphorylation at Ser-1501 by PKC in a highly conserved cytoplasmic loop slows inactivation of the sodium channel and reduces peak sodium currents. As to expression, expressed in enterochromaffin cells in both colon and small bowel (at protein level).

The protein localises to the cell membrane. It is found in the basal cell membrane. The catalysed reaction is Na(+)(in) = Na(+)(out). Its function is as follows. Pore-forming subunit of Nav1.3, a voltage-gated sodium (Nav) channel that directly mediates the depolarizing phase of action potentials in excitable membranes. Navs, also called VGSCs (voltage-gated sodium channels) or VDSCs (voltage-dependent sodium channels), operate by switching between closed and open conformations depending on the voltage difference across the membrane. In the open conformation they allow Na(+) ions to selectively pass through the pore, along their electrochemical gradient. The influx of Na+ ions provokes membrane depolarization, initiating the propagation of electrical signals throughout cells and tissues. In some secretory cell types, it also participates in cell excitability through membrane depolarization and regulates cells responsiveness to stimuli triggering secretion. For instance, it controls the release of serotonin/5-hydroxytryptamine by enterochromaffin cells and is required for both glucagon- and glucose-induced insulin secretion in pancreatic endocrine cells. This Homo sapiens (Human) protein is Sodium channel protein type 3 subunit alpha.